Here is a 219-residue protein sequence, read N- to C-terminus: Inner membrane protein YghB (219 aa).

Over 1–17 (MAVIQDIIAALWQHDFA) the chain is Cytoplasmic. Residues 18–38 (ALANPHVVSVVYFVMFATLFL) traverse the membrane as a helical segment. Residues 39–67 (ENGLLPASFLPGDSLLLLAGALIAQDVMH) lie on the Periplasmic side of the membrane. Residues 68–88 (FLPTIGILTAAASLGCWLSYI) traverse the membrane as a helical segment. Residues 89–160 (QGRWLGNTRT…RRFQFFNWLS (72 aa)) lie on the Cytoplasmic side of the membrane. The chain crosses the membrane as a helical span at residues 161 to 181 (GLLWVTVVTSFGYALSMIPFV). The Periplasmic segment spans residues 182 to 191 (KRHEDQVMTF). Residues 192-212 (LMILPVALLVAGLLGTLVVVI) form a helical membrane-spanning segment. Residues 213 to 219 (KKKYCNA) lie on the Cytoplasmic side of the membrane.

This sequence belongs to the DedA family.

The protein localises to the cell inner membrane. This chain is Inner membrane protein YghB (yghB), found in Salmonella typhimurium (strain LT2 / SGSC1412 / ATCC 700720).